The sequence spans 65 residues: Putative potassium channel toxin Ts21 (65 aa).

Positions 1-25 (MNKVYLVAILVLSVLLVANVSPIEG) are cleaved as a signal peptide. 3 cysteine pairs are disulfide-bonded: Cys31/Cys53, Cys38/Cys61, and Cys42/Cys63.

This sequence belongs to the short scorpion toxin superfamily. Potassium channel inhibitor family. Alpha-KTx 11 subfamily. Expressed by the venom gland.

The protein localises to the secreted. Functionally, this recombinant toxin inhibits the mammalian voltage-gated potassium channels Kv1.3/KCNA3 in vitro with an IC(50) of 26.40 nM. The protein is Putative potassium channel toxin Ts21 of Tityus serrulatus (Brazilian scorpion).